The primary structure comprises 187 residues: Probable nicotinate-nucleotide adenylyltransferase (187 aa).

Belongs to the NadD family.

It carries out the reaction nicotinate beta-D-ribonucleotide + ATP + H(+) = deamido-NAD(+) + diphosphate. It functions in the pathway cofactor biosynthesis; NAD(+) biosynthesis; deamido-NAD(+) from nicotinate D-ribonucleotide: step 1/1. Its function is as follows. Catalyzes the reversible adenylation of nicotinate mononucleotide (NaMN) to nicotinic acid adenine dinucleotide (NaAD). The sequence is that of Probable nicotinate-nucleotide adenylyltransferase from Agrobacterium fabrum (strain C58 / ATCC 33970) (Agrobacterium tumefaciens (strain C58)).